The primary structure comprises 372 residues: 4-hydroxy-3-methylbut-2-en-1-yl diphosphate synthase (flavodoxin) (372 aa).

Positions 270, 273, 305, and 312 each coordinate [4Fe-4S] cluster.

It belongs to the IspG family. [4Fe-4S] cluster is required as a cofactor.

It carries out the reaction (2E)-4-hydroxy-3-methylbut-2-enyl diphosphate + oxidized [flavodoxin] + H2O + 2 H(+) = 2-C-methyl-D-erythritol 2,4-cyclic diphosphate + reduced [flavodoxin]. Its pathway is isoprenoid biosynthesis; isopentenyl diphosphate biosynthesis via DXP pathway; isopentenyl diphosphate from 1-deoxy-D-xylulose 5-phosphate: step 5/6. Converts 2C-methyl-D-erythritol 2,4-cyclodiphosphate (ME-2,4cPP) into 1-hydroxy-2-methyl-2-(E)-butenyl 4-diphosphate. This Shewanella amazonensis (strain ATCC BAA-1098 / SB2B) protein is 4-hydroxy-3-methylbut-2-en-1-yl diphosphate synthase (flavodoxin).